The primary structure comprises 313 residues: Aspartate carbamoyltransferase catalytic subunit (313 aa).

Carbamoyl phosphate-binding residues include Arg54 and Thr55. L-aspartate is bound at residue Lys82. The carbamoyl phosphate site is built by Arg104, His132, and Gln135. Residues Arg165 and Arg219 each coordinate L-aspartate. Carbamoyl phosphate-binding residues include Gly260 and Pro261.

The protein belongs to the aspartate/ornithine carbamoyltransferase superfamily. ATCase family. Heterododecamer (2C3:3R2) of six catalytic PyrB chains organized as two trimers (C3), and six regulatory PyrI chains organized as three dimers (R2).

The enzyme catalyses carbamoyl phosphate + L-aspartate = N-carbamoyl-L-aspartate + phosphate + H(+). It functions in the pathway pyrimidine metabolism; UMP biosynthesis via de novo pathway; (S)-dihydroorotate from bicarbonate: step 2/3. Its function is as follows. Catalyzes the condensation of carbamoyl phosphate and aspartate to form carbamoyl aspartate and inorganic phosphate, the committed step in the de novo pyrimidine nucleotide biosynthesis pathway. This chain is Aspartate carbamoyltransferase catalytic subunit, found in Thermobifida fusca (strain YX).